Here is a 198-residue protein sequence, read N- to C-terminus: HTH-type transcriptional regulator BetI (198 aa).

In terms of domain architecture, HTH tetR-type spans 8–68; that stretch reads PLRRRELIDA…ATMRHLLREL (61 aa). A DNA-binding region (H-T-H motif) is located at residues 31-50; the sequence is TVAQIAHEAGVSPALAHHYF.

The protein operates within amine and polyamine biosynthesis; betaine biosynthesis via choline pathway [regulation]. Its function is as follows. Repressor involved in the biosynthesis of the osmoprotectant glycine betaine. It represses transcription of the choline transporter BetT and the genes of BetAB involved in the synthesis of glycine betaine. This chain is HTH-type transcriptional regulator BetI, found in Brucella abortus (strain 2308).